The chain runs to 275 residues: Mitochondrial prohibitin complex protein 1 (275 aa).

Residues 180-213 (REFTEAVEMKQVAQQEAEKARYLVEKAEQMKIAA) adopt a coiled-coil conformation.

Belongs to the prohibitin family. High molecular weight complex that consist of phb-1 and phb-2.

It localises to the mitochondrion inner membrane. PHB proteins are essential during embryonic development and are required for somatic and germline differentiation in the larval gonad. A deficiency in PHB proteins results in altered mitochondrial biogenesis in body wall muscle cells. The polypeptide is Mitochondrial prohibitin complex protein 1 (phb-1) (Caenorhabditis elegans).